Reading from the N-terminus, the 334-residue chain is Beta-hexosaminidase (334 aa).

Substrate is bound by residues Asp62, Arg70, Arg131, and Lys161–His162. His174 serves as the catalytic Proton donor/acceptor. Asp246 acts as the Nucleophile in catalysis.

It belongs to the glycosyl hydrolase 3 family. NagZ subfamily.

It localises to the cytoplasm. It carries out the reaction Hydrolysis of terminal non-reducing N-acetyl-D-hexosamine residues in N-acetyl-beta-D-hexosaminides.. The protein operates within cell wall biogenesis; peptidoglycan recycling. Functionally, plays a role in peptidoglycan recycling by cleaving the terminal beta-1,4-linked N-acetylglucosamine (GlcNAc) from peptide-linked peptidoglycan fragments, giving rise to free GlcNAc, anhydro-N-acetylmuramic acid and anhydro-N-acetylmuramic acid-linked peptides. This Tolumonas auensis (strain DSM 9187 / NBRC 110442 / TA 4) protein is Beta-hexosaminidase.